We begin with the raw amino-acid sequence, 318 residues long: NADH-ubiquinone oxidoreductase chain 1 (318 aa).

The next 8 membrane-spanning stretches (helical) occupy residues 2–22, 76–96, 102–122, 146–166, 171–191, 217–237, 253–273, and 294–314; these read FMINLFLLIIPILLAMAFLTL, TLALTIALVTWIPLPLPYPLI, LLFILATSSLAVYSILWSGWA, LAIILLSLLLMNGSFTLSTLI, YLWLIIPSWPLAMMWFISTLA, AGPFALFFMAEYTNIIMMNAL, ETYTTSFAIKTLLLTILFLWV, and LPLTLALCMWYVSLPVLASCI.

It belongs to the complex I subunit 1 family. Core subunit of respiratory chain NADH dehydrogenase (Complex I) which is composed of 45 different subunits.

Its subcellular location is the mitochondrion inner membrane. It carries out the reaction a ubiquinone + NADH + 5 H(+)(in) = a ubiquinol + NAD(+) + 4 H(+)(out). Functionally, core subunit of the mitochondrial membrane respiratory chain NADH dehydrogenase (Complex I) which catalyzes electron transfer from NADH through the respiratory chain, using ubiquinone as an electron acceptor. Essential for the catalytic activity and assembly of complex I. This is NADH-ubiquinone oxidoreductase chain 1 (MT-ND1) from Lemur catta (Ring-tailed lemur).